We begin with the raw amino-acid sequence, 174 residues long: Gamma-crystallin C (174 aa).

2 Beta/gamma crystallin 'Greek key' domains span residues 2-40 and 41-83; these read GKIT…RVDS and GCWM…RLIP. Cysteine 23 carries the S-methylcysteine modification. The interval 84-87 is connecting peptide; it reads HTGS. Beta/gamma crystallin 'Greek key' domains lie at 88 to 128 and 129 to 171; these read HRMR…HVLE and GCWV…RRVV.

It belongs to the beta/gamma-crystallin family.

Its function is as follows. Crystallins are the dominant structural components of the vertebrate eye lens. This Rattus norvegicus (Rat) protein is Gamma-crystallin C (Crygc).